We begin with the raw amino-acid sequence, 484 residues long: Maintenance of mitochondrial morphology protein 1 (484 aa).

At 1–22 the chain is on the lumenal side; that stretch reads MSFQQSETVPVPAQSSLSFTQG. A helical transmembrane segment spans residues 23–43; the sequence is FLLGQLSVVLLIGAFIKFFIF. At 44–484 the chain is on the cytoplasmic side; it reads GEAPPPPSRG…PGSLSGAAAR (441 aa). 3 disordered regions span residues 50–98, 272–319, and 388–484; these read PSRG…SSST, STPP…TGSP, and RTGV…AAAR. A compositionally biased stretch (basic residues) spans 54-64; that stretch reads LSHRASTHRRS. Composition is skewed to polar residues over residues 65–78 and 85–98; these read NSIY…ANNR and SNSN…SSST. Positions 130–380 constitute an SMP-LTD domain; that stretch reads QPESLDWFNV…EPRVQVVGLP (251 aa). Residues 272–286 show a composition bias toward pro residues; it reads STPPLHTPSPSPSPP. Residues 399 to 408 are compositionally biased toward polar residues; the sequence is TGSNAASRSA. Positions 413-427 are enriched in basic and acidic residues; sequence LGDHHLGDREPEGLR. 2 stretches are compositionally biased toward polar residues: residues 437-449 and 466-476; these read QFDS…SYNV and GALSEQFQMPG.

Belongs to the MMM1 family. In terms of assembly, homodimer. Component of the ER-mitochondria encounter structure (ERMES) or MDM complex, composed of mmm1, mdm10, mdm12 and mdm34. A mmm1 homodimer associates with one molecule of mdm12 on each side in a pairwise head-to-tail manner, and the SMP-LTD domains of mmm1 and mdm12 generate a continuous hydrophobic tunnel for phospholipid trafficking.

The protein resides in the endoplasmic reticulum membrane. In terms of biological role, component of the ERMES/MDM complex, which serves as a molecular tether to connect the endoplasmic reticulum (ER) and mitochondria. Components of this complex are involved in the control of mitochondrial shape and protein biogenesis, and function in nonvesicular lipid trafficking between the ER and mitochondria. The mdm12-mmm1 subcomplex functions in the major beta-barrel assembly pathway that is responsible for biogenesis of all outer membrane beta-barrel proteins, and acts in a late step after the SAM complex. The mdm10-mdm12-mmm1 subcomplex further acts in the TOM40-specific pathway after the action of the mdm12-mmm1 complex. Essential for establishing and maintaining the structure of mitochondria and maintenance of mtDNA nucleoids. The sequence is that of Maintenance of mitochondrial morphology protein 1 from Aspergillus niger (strain ATCC MYA-4892 / CBS 513.88 / FGSC A1513).